The following is a 45-amino-acid chain: Lysis protein for colicin E1 (45 aa).

The first 17 residues, Met-1–Gly-17, serve as a signal peptide directing secretion. Cys-18 carries the N-palmitoyl cysteine lipid modification. Cys-18 is lipidated: S-diacylglycerol cysteine.

It localises to the cell outer membrane. Functionally, lysis proteins are required for both colicin release and partial cell lysis. The polypeptide is Lysis protein for colicin E1 (lys) (Escherichia coli).